Reading from the N-terminus, the 140-residue chain is Small ribosomal subunit protein uS12m (140 aa).

The transit peptide at M1 to M30 directs the protein to the mitochondrion.

Belongs to the universal ribosomal protein uS12 family.

The protein resides in the mitochondrion. This Drosophila melanogaster (Fruit fly) protein is Small ribosomal subunit protein uS12m (tko).